The sequence spans 422 residues: Large ribosomal subunit protein uL4 (422 aa).

Alanine 2 carries the N-acetylalanine modification. Lysine 14 is subject to N6-acetyllysine. Omega-N-methylarginine is present on arginine 97. An N6-acetyllysine modification is found at lysine 106. Lysine 239 participates in a covalent cross-link: Glycyl lysine isopeptide (Lys-Gly) (interchain with G-Cter in SUMO2). At lysine 259 the chain carries N6-acetyllysine. Threonine 266 is subject to Phosphothreonine. A phosphoserine mark is found at serine 290 and serine 295. A Citrulline modification is found at arginine 300. Residue lysine 327 forms a Glycyl lysine isopeptide (Lys-Gly) (interchain with G-Cter in SUMO2) linkage. 2 positions are modified to N6-acetyllysine: lysine 333 and lysine 353. The segment at glutamate 359–alanine 422 is disordered. N6-acetyllysine; alternate is present on lysine 361. Lysine 361 participates in a covalent cross-link: Glycyl lysine isopeptide (Lys-Gly) (interchain with G-Cter in SUMO1); alternate. Phosphoserine is present on serine 362. Composition is skewed to basic and acidic residues over residues asparagine 376 to lysine 385 and proline 402 to alanine 422.

Belongs to the universal ribosomal protein uL4 family. Component of the large ribosomal subunit. May bind IPO9 with low affinity. Interacts with RBM3. Citrullinated by PADI4.

The protein resides in the cytoplasm. Its function is as follows. Component of the large ribosomal subunit. The ribosome is a large ribonucleoprotein complex responsible for the synthesis of proteins in the cell. This Bos taurus (Bovine) protein is Large ribosomal subunit protein uL4 (RPL4).